The sequence spans 564 residues: Benomyl/methotrexate resistance protein (564 aa).

The tract at residues 60 to 101 (IDNQGEPNSSQSSSSNNTIVDNNNNNNNDVDGDKIVVTWDGD) is disordered. Residues 67 to 88 (NSSQSSSSNNTIVDNNNNNNND) are compositionally biased toward low complexity. Helical transmembrane passes span 116–136 (AFFIFQISFLTTSVYMGSAVY), 153–173 (VATLPLTLFVIGYGVGPLVFS), 184–204 (TSIYIITLFLFVILQIPTALV), 210–229 (LCILRFLGGFFASPCLATGG), 241–262 (LPVGLAAWSLGAVCGPSFGPFF), 274–294 (WTFWFMCIISGFSFVMLCFTL), 358–374 (IYIAMVYSILYLFFEVF), 393–411 (YMSIVIGIVIAAFIYIPVI), 431–451 (IPIAIVGGILLTSGLFIFGWS), 457–476 (HWVGPLFGAATTASGAFLIF), 489–506 (PHYIASVFASNDLFRSVI), and 530–551 (WGSSVLGFITLVMIAIPVLFYL).

This sequence belongs to the major facilitator superfamily. CAR1 family.

The protein localises to the membrane. Its function is as follows. Probable transporter. Confers resistance to benomyl and methotrexate. This Candida albicans (Yeast) protein is Benomyl/methotrexate resistance protein (MDR1).